Reading from the N-terminus, the 202-residue chain is 7-cyano-7-deazaguanine synthase 1 (202 aa).

Residue 7–17 (MSGGLDSSSAA) coordinates ATP. Zn(2+) is bound by residues cysteine 166, cysteine 174, cysteine 177, and cysteine 180.

Belongs to the QueC family. It depends on Zn(2+) as a cofactor.

The enzyme catalyses 7-carboxy-7-deazaguanine + NH4(+) + ATP = 7-cyano-7-deazaguanine + ADP + phosphate + H2O + H(+). Its pathway is purine metabolism; 7-cyano-7-deazaguanine biosynthesis. In terms of biological role, catalyzes the ATP-dependent conversion of 7-carboxy-7-deazaguanine (CDG) to 7-cyano-7-deazaguanine (preQ(0)). The polypeptide is 7-cyano-7-deazaguanine synthase 1 (queC1) (Sulfurisphaera tokodaii (strain DSM 16993 / JCM 10545 / NBRC 100140 / 7) (Sulfolobus tokodaii)).